The primary structure comprises 257 residues: ADP-dependent (S)-NAD(P)H-hydrate dehydratase (257 aa).

The YjeF C-terminal domain maps to 1 to 257; sequence MGRLQRTLSN…VIERIPDTIR (257 aa). Gly-200 lines the AMP pocket. A (6S)-NADPHX-binding site is contributed by Asp-201.

This sequence belongs to the NnrD/CARKD family. As to quaternary structure, homotetramer. Mg(2+) is required as a cofactor.

The enzyme catalyses (6S)-NADHX + ADP = AMP + phosphate + NADH + H(+). It catalyses the reaction (6S)-NADPHX + ADP = AMP + phosphate + NADPH + H(+). Functionally, catalyzes the dehydration of the S-form of NAD(P)HX at the expense of ADP, which is converted to AMP. Together with NAD(P)HX epimerase, which catalyzes the epimerization of the S- and R-forms, the enzyme allows the repair of both epimers of NAD(P)HX, a damaged form of NAD(P)H that is a result of enzymatic or heat-dependent hydration. This Haloterrigena turkmenica (strain ATCC 51198 / DSM 5511 / JCM 9101 / NCIMB 13204 / VKM B-1734 / 4k) (Halococcus turkmenicus) protein is ADP-dependent (S)-NAD(P)H-hydrate dehydratase.